The primary structure comprises 106 residues: MDIWPEFQRDLEMYRDVVLSIKRNLRLYEECIESLVHQIGSTNFDNAQPLFDDLFRMQSELATMLYKYEYKPGKRIQDLIYHLDRDDFYSRKYWHKKFSDGLAWPE.

As to quaternary structure, forms a contact-dependent growth inhibition complex of CdiA-CT-NC101, CdiI-NC101 and EF-Tu; the complex is a dimer of heterotrimers.

Its function is as follows. Immunity protein component of a toxin-immunity protein module, which functions as a cellular contact-dependent growth inhibition (CDI) system. CDI modules allow bacteria to communicate with and inhibit the growth of closely related neighboring bacteria in a contact-dependent fashion. Neutralizes the toxic activity of cognate toxin CdiA-NC101 (the C-terminal 154 residue CT fragment). Does not inhibit toxic activity of CdiA from other toxin-immunity modules or strains of E.coli. Mediates dimerization of the ternary CdiA-CT-NC101, CdiI-NC101 and EF-Tu complex; both CdiI molecules contact both EF-Tu molecules. The protein is Immunity protein CdiI of Escherichia coli (strain NC101).